A 198-amino-acid chain; its full sequence is Probable GTP-binding protein EngB (198 aa).

The 174-residue stretch at 22–195 (NRNEVAFVGR…IDKLFLEFAT (174 aa)) folds into the EngB-type G domain. GTP is bound by residues 30–37 (GRSNVGKS), 57–61 (GKTRL), 75–78 (DLPG), 142–145 (TKSD), and 174–176 (YSS). The Mg(2+) site is built by Ser37 and Thr59.

It belongs to the TRAFAC class TrmE-Era-EngA-EngB-Septin-like GTPase superfamily. EngB GTPase family. Mg(2+) serves as cofactor.

Necessary for normal cell division and for the maintenance of normal septation. This is Probable GTP-binding protein EngB from Clostridium botulinum (strain Alaska E43 / Type E3).